A 414-amino-acid polypeptide reads, in one-letter code: N-carbamoyl-L-amino-acid amidohydrolase (414 aa).

A divalent metal cation is bound by residues His83, Asp94, Glu129, and His195. An N-carbamoyl-L-alpha-amino acid is bound by residues Gln198, His231, Asn281, Arg294, and Gly363. The tract at residues 214 to 333 is involved in dimerization; the sequence is GIAGPSWFKV…QIEKNMAAVP (120 aa). His388 lines the a divalent metal cation pocket.

Belongs to the peptidase M20 family. In terms of assembly, homodimer. Requires Mn(2+) as cofactor. Ni(2+) is required as a cofactor. Co(2+) serves as cofactor. It depends on Fe(2+) as a cofactor.

The enzyme catalyses an N-carbamoyl-L-alpha-amino acid + H2O + 2 H(+) = an L-alpha-amino acid + NH4(+) + CO2. It catalyses the reaction N-carbamoyl-L-methionine + H2O + 2 H(+) = L-methionine + NH4(+) + CO2. Catalyzes the hydrolysis of N-carbamoyl-L-alpha-amino acids to free L-alpha-amino acids. Is strictly L-specific since it is inactive toward N-carbamoyl-D-alpha-amino acids. This is N-carbamoyl-L-amino-acid amidohydrolase from Pseudomonas sp. (strain NS671).